Consider the following 2053-residue polypeptide: Nonribosomal peptide synthetase pboA (2053 aa).

The segment at 16-402 (ACRDNADRPA…GRRDRVAKVR (387 aa)) is adenylation 1. Residues 503-579 (RSYASVDEVI…HLITVCRERR (77 aa)) form the Carrier 1 domain. Ser-540 carries the post-translational modification O-(pantetheine 4'-phosphoryl)serine. Residues 611–896 (NDPSLYCVKH…LLQSVHRTVQ (286 aa)) form a condensation 1 region. Positions 1034–1418 (SAAARNPTNI…GRRDRQVKLR (385 aa)) are adenylation 2. The Carrier 2 domain occupies 1515-1593 (VPDTSVKKII…DIVALVEGKI (79 aa)). An O-(pantetheine 4'-phosphoryl)serine modification is found at Ser-1553. A condensation 2 region spans residues 1630-1981 (NSQCQSGFNV…LQLRLEYDSD (352 aa)).

This sequence belongs to the NRP synthetase family. It depends on pantetheine 4'-phosphate as a cofactor.

The protein operates within secondary metabolite biosynthesis. Its function is as follows. Nonribosomal peptide synthetase; part of the gene cluster that mediates the biosynthesis of protubonine B, a hydroxylated and diacetylated cyclo-L-Trp-L-Leu derivative. The first step of the protubonine B synthesis is performed by the nonribosomal peptide synthetase pboA that catalyzes the formation of cyclo-L-Trp-L-Leu by condensing L-Leu with L-Trp. The flavin-dependent monooxygenase pboD is responsible for hydroxylation at C-3 of the indole ring and subsequent formation of the pyrrolidine ring, leadind to protubonine D. Protubonine D is further diacetylated by two acetyltransferases, pboB and pboC, to form the final product protubonine B via protubonine C. This is Nonribosomal peptide synthetase pboA from Aspergillus ustus.